We begin with the raw amino-acid sequence, 204 residues long: Heart- and neural crest derivatives-expressed protein 1 (204 aa).

3 disordered regions span residues 1–24 (MNLV…HPAH), 57–115 (APDF…RTES), and 172–204 (LKKA…EKRD). Composition is skewed to basic residues over residues 8–22 (AHHH…HPHP) and 98–110 (LGRR…KKER). The 53-residue stretch at 100–152 (RRKGSGPKKERRRTESINSAFAELRECIPNVPADTKLSKIKTLRLATSYIAYL) folds into the bHLH domain. Residue Thr-113 is modified to Phosphothreonine; by PLK4. Position 115 is a phosphoserine; by PLK4 (Ser-115).

Efficient DNA binding requires dimerization with another bHLH protein. Forms homodimers and heterodimers with TCF3 gene products E12 and E47, HAND2 and HEY1, HEY2 and HEYL (hairy-related transcription factors). Interacts with MDFIC. Interacts with SOX15; the interaction enhances HAND1-induced differentiation of trophoblast giant cells. Post-translationally, phosphorylation by PLK4 disrupts the interaction with MDFIC and leads to translocation into the nucleoplasm, allowing dimerization and transcription factor activity.

It is found in the nucleus. The protein resides in the nucleoplasm. The protein localises to the nucleolus. In terms of biological role, transcription factor that plays an essential role in both trophoblast giant cell differentiation and in cardiac morphogenesis. Binds the DNA sequence 5'-NRTCTG-3' (non-canonical E-box). Acts as a transcriptional repressor of SOX15. In the adult, could be required for ongoing expression of cardiac-specific genes. This chain is Heart- and neural crest derivatives-expressed protein 1 (HAND1), found in Ovis aries (Sheep).